A 370-amino-acid chain; its full sequence is uncharacterized protein (370 aa).

K207 is subject to N6-(pyridoxal phosphate)lysine.

The protein belongs to the class-V pyridoxal-phosphate-dependent aminotransferase family. Requires pyridoxal 5'-phosphate as cofactor.

This is an uncharacterized protein from Bacillus subtilis (strain 168).